The primary structure comprises 124 residues: Small ribosomal subunit protein uS12 (124 aa).

A 3-methylthioaspartic acid modification is found at aspartate 89.

The protein belongs to the universal ribosomal protein uS12 family. As to quaternary structure, part of the 30S ribosomal subunit. Contacts proteins S8 and S17. May interact with IF1 in the 30S initiation complex.

Functionally, with S4 and S5 plays an important role in translational accuracy. Its function is as follows. Interacts with and stabilizes bases of the 16S rRNA that are involved in tRNA selection in the A site and with the mRNA backbone. Located at the interface of the 30S and 50S subunits, it traverses the body of the 30S subunit contacting proteins on the other side and probably holding the rRNA structure together. The combined cluster of proteins S8, S12 and S17 appears to hold together the shoulder and platform of the 30S subunit. This chain is Small ribosomal subunit protein uS12, found in Acinetobacter baylyi (strain ATCC 33305 / BD413 / ADP1).